The primary structure comprises 421 residues: E3 ubiquitin-protein ligase MARCHF4 (421 aa).

The N-terminal stretch at 1–16 is a signal peptide; it reads MLLAIGVIVWCWGLLS. Positions 60–79 are disordered; that stretch reads ELNAEGNATSSATESHSLAN. Over residues 65–77 the composition is skewed to polar residues; sequence GNATSSATESHSL. The RING-CH-type zinc finger occupies 135–195; sequence DSGVRTPLCR…ELCYYKYQVI (61 aa). Zn(2+) contacts are provided by cysteine 143, cysteine 146, cysteine 159, cysteine 161, histidine 169, cysteine 172, cysteine 185, and cysteine 188. Transmembrane regions (helical) follow at residues 218–238 and 252–272; these read IAAA…LVWS and LFQI…ALIV. Disordered regions lie at residues 319–385 and 401–421; these read PLTH…LPDH and QEPR…VTTV. 2 stretches are compositionally biased toward polar residues: residues 367 to 380 and 403 to 412; these read TEPQ…NGQP and PRGQTSNSNR.

It is found in the golgi apparatus membrane. It carries out the reaction S-ubiquitinyl-[E2 ubiquitin-conjugating enzyme]-L-cysteine + [acceptor protein]-L-lysine = [E2 ubiquitin-conjugating enzyme]-L-cysteine + N(6)-ubiquitinyl-[acceptor protein]-L-lysine.. It functions in the pathway protein modification; protein ubiquitination. E3 ubiquitin-protein ligase. E3 ubiquitin ligases accept ubiquitin from an E2 ubiquitin-conjugating enzyme in the form of a thioester and then directly transfer the ubiquitin to targeted substrates. This chain is E3 ubiquitin-protein ligase MARCHF4 (marchf4), found in Danio rerio (Zebrafish).